We begin with the raw amino-acid sequence, 109 residues long: Movement protein (109 aa).

The tract at residues 1 to 28 is disordered; that stretch reads MDSFGRAPPLWPQSALPRVPGAAPSSSG. A helical transmembrane segment spans residues 34–54; sequence VGEIAIFTFVAVLALYLLWSW.

Belongs to the mastrevirus movement protein family. Interacts with the capsid protein (CP). Part of a MP-CP-viral DNA complex.

The protein resides in the host membrane. Involved in the viral transport within, and between cells. The sequence is that of Movement protein from Sugarcane streak virus (isolate South Africa) (SSV).